Consider the following 284-residue polypeptide: Bifunctional protein FolD 2 (284 aa).

Residues 166–168 and Ile-232 contribute to the NADP(+) site; that span reads GAS.

Belongs to the tetrahydrofolate dehydrogenase/cyclohydrolase family. In terms of assembly, homodimer.

It catalyses the reaction (6R)-5,10-methylene-5,6,7,8-tetrahydrofolate + NADP(+) = (6R)-5,10-methenyltetrahydrofolate + NADPH. The enzyme catalyses (6R)-5,10-methenyltetrahydrofolate + H2O = (6R)-10-formyltetrahydrofolate + H(+). Its pathway is one-carbon metabolism; tetrahydrofolate interconversion. Its function is as follows. Catalyzes the oxidation of 5,10-methylenetetrahydrofolate to 5,10-methenyltetrahydrofolate and then the hydrolysis of 5,10-methenyltetrahydrofolate to 10-formyltetrahydrofolate. This is Bifunctional protein FolD 2 from Colwellia psychrerythraea (strain 34H / ATCC BAA-681) (Vibrio psychroerythus).